A 474-amino-acid polypeptide reads, in one-letter code: Synaptotagmin-15B (474 aa).

Disordered regions lie at residues 1-62 (MGVV…AASG) and 75-128 (PRAA…PPAV). Low complexity predominate over residues 75 to 88 (PRAAAGHQQHHGPP). C2 domains lie at 200–317 (CLGR…RRVI) and 331–452 (EFGD…EHWD).

The protein belongs to the synaptotagmin family.

The chain is Synaptotagmin-15B from Homo sapiens (Human).